Here is a 119-residue protein sequence, read N- to C-terminus: Large ribosomal subunit protein bL20 (119 aa).

This sequence belongs to the bacterial ribosomal protein bL20 family.

Functionally, binds directly to 23S ribosomal RNA and is necessary for the in vitro assembly process of the 50S ribosomal subunit. It is not involved in the protein synthesizing functions of that subunit. In Streptococcus gordonii (strain Challis / ATCC 35105 / BCRC 15272 / CH1 / DL1 / V288), this protein is Large ribosomal subunit protein bL20.